The following is a 362-amino-acid chain: RING finger protein 32 (362 aa).

The RING-type 1; atypical zinc-finger motif lies at 127 to 169; it reads CPICKEEFELRPQVLLSCSHVFHKACLQAFEKFTNKKTCPLCR. Positions 186-215 constitute an IQ domain; the sequence is RIKCVTRIQAYWRGCVVRKWYRNLRKTVPP. An RING-type 2; atypical zinc finger spans residues 293–352; the sequence is CSICLAPLSAAGGQRVGAGRRSREMALLSCSHVFHHACLLALEEFSVGDRPPFHACPLCR.

As to expression, highly expressed in testis, less abundant in ovary.

It is found in the cytoplasm. Functionally, may play a role in sperm formation. The chain is RING finger protein 32 (RNF32) from Homo sapiens (Human).